The sequence spans 122 residues: Large ribosomal subunit protein uL14c (122 aa).

Belongs to the universal ribosomal protein uL14 family. As to quaternary structure, part of the 50S ribosomal subunit.

The protein resides in the plastid. Its subcellular location is the chloroplast. Binds to 23S rRNA. This is Large ribosomal subunit protein uL14c from Lemna minor (Common duckweed).